Consider the following 461-residue polypeptide: Ubiquinone hydroxylase UbiM (461 aa).

The protein belongs to the UbiH/COQ6 family. It depends on FAD as a cofactor.

The enzyme catalyses a 2-(all-trans-polyprenyl)phenol + NADPH + O2 + H(+) = a 3-(all-trans-polyprenyl)benzene-1,2-diol + NADP(+) + H2O. The catalysed reaction is a 5-methoxy-2-methyl-3-(all-trans-polyprenyl)benzene-1,4-diol + AH2 + O2 = a 3-demethylubiquinol + A + H2O. It participates in cofactor biosynthesis; ubiquinone biosynthesis. In terms of biological role, catalyzes the hydroxylation of three positions of the aromatic ring during ubiquinone biosynthesis. The chain is Ubiquinone hydroxylase UbiM from Neisseria meningitidis serogroup C / serotype 2a (strain ATCC 700532 / DSM 15464 / FAM18).